Reading from the N-terminus, the 229-residue chain is MAGKKYRDAVAKTDRFQEYDLVDAVEKIREITQVKFDATIDIAMKLGVDPRHADQVVRGTVMLPHGTGKTVSVLVVCKEAKAEEAVAAGADFVGFEEYVEKIQNGWTGVDVIIATPDVMGQLGKVAKILGPRGLMPNPKSGTVTMDVAKAVKEVKAGKIEFRVDKAGNVHAPVGKVSFQSEQLVENITSFLKEVVRLKPSAAKGQYVQGIALSSTMSPSVKVKREKFVA.

It belongs to the universal ribosomal protein uL1 family. Part of the 50S ribosomal subunit.

Binds directly to 23S rRNA. The L1 stalk is quite mobile in the ribosome, and is involved in E site tRNA release. In terms of biological role, protein L1 is also a translational repressor protein, it controls the translation of the L11 operon by binding to its mRNA. The protein is Large ribosomal subunit protein uL1 of Chlorobium phaeobacteroides (strain DSM 266 / SMG 266 / 2430).